Consider the following 293-residue polypeptide: Protease HtpX homolog (293 aa).

The next 2 membrane-spanning stretches (helical) occupy residues 4–24 and 39–59; these read IFLF…VLSL and PMLL…SLLI. His-144 lines the Zn(2+) pocket. Residue Glu-145 is part of the active site. Residue His-148 participates in Zn(2+) binding. 2 consecutive transmembrane segments (helical) span residues 159 to 179 and 200 to 220; these read LVQG…GYFV and ITVL…VAWF. Position 225 (Glu-225) interacts with Zn(2+).

Belongs to the peptidase M48B family. Zn(2+) serves as cofactor.

The protein localises to the cell inner membrane. The polypeptide is Protease HtpX homolog (Herminiimonas arsenicoxydans).